A 395-amino-acid chain; its full sequence is Proteinase-activated receptor 2 (395 aa).

A signal peptide spans M1–T25. 2 N-linked (GlcNAc...) asparagine glycosylation sites follow: N23 and N29. Positions V26 to R34 are cleaved as a propeptide — removed for receptor activation. At S35–G69 the chain is on the extracellular side. A helical transmembrane segment spans residues K70 to L99. Over F100–H106 the chain is Cytoplasmic. A helical membrane pass occupies residues P107–H135. Topologically, residues G136–K147 are extracellular. Cysteines 146 and 224 form a disulfide. A helical transmembrane segment spans residues V148–I175. The Cytoplasmic segment spans residues V176–H181. Residues P182–V209 traverse the membrane as a helical segment. At V210–L233 the chain is on the extracellular side. An N-linked (GlcNAc...) asparagine glycan is attached at N220. A helical membrane pass occupies residues V234–L267. The Cytoplasmic segment spans residues Q268–S275. Residues S276–R315 form a helical membrane-spanning segment. At G316–Y321 the chain is on the extracellular side. The chain crosses the membrane as a helical span at residues A322–I345. Over S346–Y395 the chain is Cytoplasmic. C359 carries the S-palmitoyl cysteine lipid modification.

Belongs to the G-protein coupled receptor 1 family. Interacts with TLR4, COPS5 and TMED2. Interacts with GNAQ, GNA11, GNA12, GNA13 and GNA14. In terms of processing, a proteolytic cleavage generates a new N-terminus that functions as a tethered ligand. Activating serine proteases include trypsin, mast cell tryptase, coagulation factors VII and Xa, myeloblastin/PRTN3 and membrane-type serine protease 1/ST14. Proposed subsequent cleavage by serine proteases is leading to receptor deactivation and include neutrophil elastase and cathepsin G. At least in part, implicated proteases are also shown to activate the receptor; the glycosylation status of the receptor is thought to contribute to the difference. N-glycosylated and sialylated. Post-translationally, multiple phosphorylated on serine and threonine residues in the cytoplasmic region upon receptor activation; required for receptor desensitization and recruitment of beta-arrestin. In terms of processing, monoubiquitinated by CBL at the plasma membrane and in early endosomes; not required for receptor endocytosis but for translocation to late endosomes or lysosomes. Deubiquitination involves STAMBP and USP8; required for lysosomal trafficking and receptor degradation.

It is found in the cell membrane. Receptor for trypsin and trypsin-like enzymes coupled to G proteins. Its function is mediated through the activation of several signaling pathways including phospholipase C (PLC), intracellular calcium, mitogen-activated protein kinase (MAPK), I-kappaB kinase/NF-kappaB and Rho. Can also be transactivated by cleaved F2R/PAR1. Involved in modulation of inflammatory responses and regulation of innate and adaptive immunity, and acts as a sensor for proteolytic enzymes generated during infection. Generally is promoting inflammation. Can signal synergistically with TLR4 and probably TLR2 in inflammatory responses and modulates TLR3 signaling. Has a protective role in establishing the endothelial barrier; the activity involves coagulation factor X. Regulates endothelial cell barrier integrity during neutrophil extravasation, probably following proteolytic cleavage by PRTN3. Proposed to have a bronchoprotective role in airway epithelium, but also shown to compromise the airway epithelial barrier by interrupting E-cadherin adhesion. Involved in the regulation of vascular tone; activation results in hypotension presumably mediated by vasodilation. Associates with a subset of G proteins alpha subunits such as GNAQ, GNA11, GNA14, GNA12 and GNA13, but probably not with G(o) alpha, G(i) subunit alpha-1 and G(i) subunit alpha-2. Believed to be a class B receptor which internalizes as a complex with arrestin and traffic with it to endosomal vesicles, presumably as desensitized receptor, for extended periods of time. Mediates inhibition of TNF-alpha stimulated JNK phosphorylation via coupling to GNAQ and GNA11; the function involves dissociation of RIPK1 and TRADD from TNFR1. Mediates phosphorylation of nuclear factor NF-kappa-B RELA subunit at 'Ser-536'; the function involves IKBKB and is predominantly independent of G proteins. Involved in cellular migration. Involved in cytoskeletal rearrangement and chemotaxis through beta-arrestin-promoted scaffolds; the function is independent of GNAQ and GNA11 and involves promotion of cofilin dephosphorylation and actin filament severing. Induces redistribution of COPS5 from the plasma membrane to the cytosol and activation of the JNK cascade is mediated by COPS5. Involved in the recruitment of leukocytes to the sites of inflammation and is the major PAR receptor capable of modulating eosinophil function such as pro-inflammatory cytokine secretion, superoxide production and degranulation. During inflammation promotes dendritic cell maturation, trafficking to the lymph nodes and subsequent T-cell activation. Involved in antimicrobial response of innate immune cells; activation enhances phagocytosis of Gram-positive and killing of Gram-negative bacteria. Acts synergistically with interferon-gamma in enhancing antiviral responses. Probably mediates activation of pro-inflammatory and pro-fibrotic responses in fibroblasts, triggered by coagulation factor Xa (F10). Probably mediates activation of barrier protective signaling responses in endothelial cells, triggered by coagulation factor Xa (F10). This Bos taurus (Bovine) protein is Proteinase-activated receptor 2 (F2RL1).